A 456-amino-acid polypeptide reads, in one-letter code: Equilibrative nucleoside transporter 2 (456 aa).

Residues 13–33 (LVGISFFILGLGTLLPWNFFI) traverse the membrane as a helical segment. Residues asparagine 48 and asparagine 57 are each glycosylated (N-linked (GlcNAc...) asparagine). 5 helical membrane-spanning segments follow: residues 70-90 (WVTL…SFLY), 99-119 (ILGS…LVKV), 124-144 (GPFF…SAVL), 162-182 (LFLS…LLSM), and 193-213 (LGYF…YLSL). The N-linked (GlcNAc...) asparagine glycan is linked to asparagine 225. Position 252 is a phosphoserine (serine 252). The next 5 helical transmembrane spans lie at 291–311 (WLTA…FPAI), 324–344 (WSQF…DWLG), 360–380 (LLPL…LCHV), 386–406 (LPIL…FAVS), and 432–452 (ALMT…SFLF).

Belongs to the SLC29A/ENT transporter (TC 2.A.57) family. Post-translationally, glycosylated. As to expression, highly expressed in skeletal muscle. Expressed in liver, lung, placenta, brain, heart, kidney and ovarian tissues. Expressed in testis at the blood-brain-barrier.

It localises to the apical cell membrane. The protein resides in the basolateral cell membrane. The enzyme catalyses inosine(in) = inosine(out). It carries out the reaction adenosine(in) = adenosine(out). The catalysed reaction is uridine(out) = uridine(in). It catalyses the reaction thymidine(in) = thymidine(out). The enzyme catalyses hypoxanthine(out) = hypoxanthine(in). It carries out the reaction adenine(out) = adenine(in). The catalysed reaction is cytidine(in) = cytidine(out). It catalyses the reaction thymine(out) = thymine(in). The enzyme catalyses uracil(in) = uracil(out). It carries out the reaction guanine(out) = guanine(in). The catalysed reaction is guanosine(in) = guanosine(out). Functionally, bidirectional uniporter involved in the facilitative transport of nucleosides and nucleobases, and contributes to maintaining their cellular homeostasis. Functions as a Na(+)-independent, passive transporter. Involved in the transport of nucleosides such as inosine, adenosine, uridine, thymidine, cytidine and guanosine. Also able to transport purine nucleobases (hypoxanthine, adenine, guanine) and pyrimidine nucleobases (thymine, uracil). Involved in nucleoside transport at basolateral membrane of kidney cells, allowing liver absorption of nucleoside metabolites. Mediates apical nucleoside uptake into Sertoli cells, thereby regulating the transport of nucleosides in testis across the blood-testis-barrier. Mediates both the influx and efflux of hypoxanthine in skeletal muscle microvascular endothelial cells to control the amount of intracellular hypoxanthine available for xanthine oxidase-mediated ROS production. In terms of biological role, non functional nucleoside transporter protein for adenosine or thymidine transport. Does not express on cell membrane. In Homo sapiens (Human), this protein is Equilibrative nucleoside transporter 2.